A 140-amino-acid polypeptide reads, in one-letter code: Non-specific lipid transfer protein GPI-anchored 33 (140 aa).

Positions 1-27 (MAYTNKVTISAAVATMMLFLAVTIVDA) are cleaved as a signal peptide. 4 disulfide bridges follow: Cys40-Cys80, Cys52-Cys64, Cys65-Cys104, and Cys78-Cys112. The N-linked (GlcNAc...) asparagine glycan is linked to Asn91. A lipid anchor (GPI-anchor amidated glycine) is attached at Gly115. The propeptide at 116 to 140 (DASGGSTNKIAASMVLLGLVASLFF) is removed in mature form.

The protein belongs to the plant LTP family.

The protein resides in the cell membrane. Its function is as follows. Probable lipid transfer protein. This chain is Non-specific lipid transfer protein GPI-anchored 33, found in Arabidopsis thaliana (Mouse-ear cress).